The following is a 229-amino-acid chain: Nisin biosynthesis regulatory protein NisR (229 aa).

In terms of domain architecture, Response regulatory spans 4 to 117; the sequence is KILIVDDDQE…QLVAKVEANI (114 aa). The residue at position 53 (D53) is a 4-aspartylphosphate. The ompR/PhoB-type DNA-binding region spans 132–229; the sequence is EIRRDLGPIT…VRGLGYQWHG (98 aa).

In terms of processing, phosphorylated by NisK.

Member of the two-component regulatory system NisK/NisR involved in the regulation of the biosynthesis of lantibiotic nisin. NisR may function as a regulatory protein. This chain is Nisin biosynthesis regulatory protein NisR (nisR), found in Lactococcus lactis subsp. lactis (Streptococcus lactis).